We begin with the raw amino-acid sequence, 135 residues long: 6-pyruvoyl tetrahydrobiopterin synthase (135 aa).

Residue H17 participates in Zn(2+) binding. C36 acts as the Proton acceptor in catalysis. Positions 40 and 42 each coordinate Zn(2+). Catalysis depends on charge relay system residues H81 and E124.

It belongs to the PTPS family. In terms of assembly, homohexamer formed of two homotrimers in a head to head fashion. Zn(2+) serves as cofactor.

The enzyme catalyses 7,8-dihydroneopterin 3'-triphosphate = 6-pyruvoyl-5,6,7,8-tetrahydropterin + triphosphate + H(+). It functions in the pathway cofactor biosynthesis; tetrahydrobiopterin biosynthesis; tetrahydrobiopterin from 7,8-dihydroneopterin triphosphate: step 1/3. Its function is as follows. Involved in the biosynthesis of tetrahydrobiopterin, an essential cofactor of aromatic amino acid hydroxylases. Catalyzes the transformation of 7,8-dihydroneopterin triphosphate into 6-pyruvoyl tetrahydropterin. The protein is 6-pyruvoyl tetrahydrobiopterin synthase (ptsA) of Dictyostelium discoideum (Social amoeba).